We begin with the raw amino-acid sequence, 459 residues long: Glycosyl hydrolase family 109 protein (459 aa).

Positions M1 to A31 form a signal peptide, tat-type signal. NAD(+) is bound by residues E64–R65, D86, W135–H138, E155–V156, and N184. Substrate is bound by residues Y213, R232, Y244–H247, and Y326. Residue Y244 participates in NAD(+) binding.

This sequence belongs to the Gfo/Idh/MocA family. Glycosyl hydrolase 109 subfamily. The cofactor is NAD(+). Predicted to be exported by the Tat system. The position of the signal peptide cleavage has not been experimentally proven.

Functionally, glycosidase. This chain is Glycosyl hydrolase family 109 protein, found in Shewanella baltica (strain OS155 / ATCC BAA-1091).